A 72-amino-acid chain; its full sequence is MSLTQLQERIEDLECKLAFQEQTIETLNDALTQQQLLLSKMQDQMKYVVGKVKNMDTSTLADPAHETPPPHY.

It belongs to the SlyX family.

In Vibrio cholerae serotype O1 (strain ATCC 39541 / Classical Ogawa 395 / O395), this protein is Protein SlyX homolog.